Reading from the N-terminus, the 28-residue chain is Putative GDSL-motif lipase/hydrolase-like protein (28 aa).

The protein belongs to the 'GDSL' lipolytic enzyme family.

The chain is Putative GDSL-motif lipase/hydrolase-like protein from Populus euphratica (Euphrates poplar).